The chain runs to 532 residues: 2,3-bisphosphoglycerate-independent phosphoglycerate mutase (532 aa).

Mn(2+)-binding residues include D15 and S65. The active-site Phosphoserine intermediate is the S65. Substrate contacts are provided by residues H126, 156-157 (RD), R188, R194, 258-261 (RPDR), and K331. 5 residues coordinate Mn(2+): D398, H402, D439, H440, and H457.

Belongs to the BPG-independent phosphoglycerate mutase family. In terms of assembly, monomer. Requires Mn(2+) as cofactor.

The catalysed reaction is (2R)-2-phosphoglycerate = (2R)-3-phosphoglycerate. It participates in carbohydrate degradation; glycolysis; pyruvate from D-glyceraldehyde 3-phosphate: step 3/5. Catalyzes the interconversion of 2-phosphoglycerate and 3-phosphoglycerate. The chain is 2,3-bisphosphoglycerate-independent phosphoglycerate mutase from Rippkaea orientalis (strain PCC 8801 / RF-1) (Cyanothece sp. (strain PCC 8801)).